Consider the following 418-residue polypeptide: Maltoporin (418 aa).

A signal peptide spans 1 to 26; it reads MLPMNRNTLGLAVTIATVFVSSTVTA.

The protein belongs to the porin LamB (TC 1.B.3) family. In terms of assembly, homotrimer formed of three 18-stranded antiparallel beta-barrels, containing three independent channels.

The protein resides in the cell outer membrane. The catalysed reaction is beta-maltose(in) = beta-maltose(out). In terms of biological role, involved in the transport of maltose and maltodextrins. In Photobacterium profundum (strain SS9), this protein is Maltoporin.